The sequence spans 453 residues: Bifunctional protein GlmU (453 aa).

A pyrophosphorylase region spans residues 1-226; that stretch reads MAFSVVILAA…EIEVEGINNR (226 aa). UDP-N-acetyl-alpha-D-glucosamine-binding positions include 8–11, Lys22, Gln73, and 78–79; these read LAAG and GT. Asp102 is a binding site for Mg(2+). Residues Gly137, Glu151, Asn166, and Asn224 each contribute to the UDP-N-acetyl-alpha-D-glucosamine site. Asn224 serves as a coordination point for Mg(2+). The tract at residues 227–247 is linker; it reads KQLAAIERAFQFEQAQELMMQ. The N-acetyltransferase stretch occupies residues 248–453; the sequence is GVSLLDPHRF…SGWQRPTKPE (206 aa). UDP-N-acetyl-alpha-D-glucosamine contacts are provided by Arg330 and Lys348. Catalysis depends on His360, which acts as the Proton acceptor. UDP-N-acetyl-alpha-D-glucosamine-binding residues include Tyr363 and Asn374. Residues Ala377, 383–384, Ser402, Ala420, and Arg437 contribute to the acetyl-CoA site; that span reads NY.

It in the N-terminal section; belongs to the N-acetylglucosamine-1-phosphate uridyltransferase family. In the C-terminal section; belongs to the transferase hexapeptide repeat family. In terms of assembly, homotrimer. It depends on Mg(2+) as a cofactor.

It is found in the cytoplasm. The catalysed reaction is alpha-D-glucosamine 1-phosphate + acetyl-CoA = N-acetyl-alpha-D-glucosamine 1-phosphate + CoA + H(+). It catalyses the reaction N-acetyl-alpha-D-glucosamine 1-phosphate + UTP + H(+) = UDP-N-acetyl-alpha-D-glucosamine + diphosphate. It functions in the pathway nucleotide-sugar biosynthesis; UDP-N-acetyl-alpha-D-glucosamine biosynthesis; N-acetyl-alpha-D-glucosamine 1-phosphate from alpha-D-glucosamine 6-phosphate (route II): step 2/2. The protein operates within nucleotide-sugar biosynthesis; UDP-N-acetyl-alpha-D-glucosamine biosynthesis; UDP-N-acetyl-alpha-D-glucosamine from N-acetyl-alpha-D-glucosamine 1-phosphate: step 1/1. It participates in bacterial outer membrane biogenesis; LPS lipid A biosynthesis. Functionally, catalyzes the last two sequential reactions in the de novo biosynthetic pathway for UDP-N-acetylglucosamine (UDP-GlcNAc). The C-terminal domain catalyzes the transfer of acetyl group from acetyl coenzyme A to glucosamine-1-phosphate (GlcN-1-P) to produce N-acetylglucosamine-1-phosphate (GlcNAc-1-P), which is converted into UDP-GlcNAc by the transfer of uridine 5-monophosphate (from uridine 5-triphosphate), a reaction catalyzed by the N-terminal domain. The sequence is that of Bifunctional protein GlmU from Pseudoalteromonas atlantica (strain T6c / ATCC BAA-1087).